Reading from the N-terminus, the 170-residue chain is Non-classical export protein 102 (170 aa).

Over 1–11 (MLAIGDVILRA) the chain is Cytoplasmic. The MARVEL domain maps to 6 to 141 (DVILRAFNFV…TFIFIASAIF (136 aa)). The chain crosses the membrane as a helical span at residues 12–32 (FNFVFLVIALGLTGSLAATTI). Residues 33 to 38 (TQHNPQ) are Extracellular-facing. Residues 39–61 (INFAVFAAAFGLLTSSFYGVFAY) form a helical membrane-spanning segment. Over 62–76 (FVAAFAWPVILFVFD) the chain is Cytoplasmic. Residues 77-97 (FLNFVFTFAAATAIAAGIRAH) form a helical membrane-spanning segment. Residues 98–125 (SCSNQDYLDDNNIAQGSSGRCRKAQAST) lie on the Extracellular side of the membrane. Residues 126–146 (AFLYFSTFIFIASAIFSAISL) traverse the membrane as a helical segment. Topologically, residues 147–170 (SKGGLFGHSSRPAPRTGVPTMSQV) are cytoplasmic.

This sequence belongs to the NCE102 family.

It is found in the cell membrane. Its function is as follows. Involved in membrane organization. Involved in a novel pathway of export of proteins that lack a cleavable signal sequence. Non-classical export pathway also functions as an alternative clearance/detoxification pathway to eliminate damaged material, when the basic repair pathway is not sufficient. Regulates actin organization and subsequent morphogenesis and pathogenesis. This chain is Non-classical export protein 102, found in Candida albicans (strain SC5314 / ATCC MYA-2876) (Yeast).